We begin with the raw amino-acid sequence, 724 residues long: Probable dipeptidyl-peptidase 5 (724 aa).

Residues 1–19 form the signal peptide; the sequence is MGALTWLSVVAAAASTALA. N-linked (GlcNAc...) asparagine glycosylation is found at Asn76, Asn97, Asn154, Asn257, Asn383, and Asn453. Ser563 serves as the catalytic Charge relay system. A glycan (N-linked (GlcNAc...) asparagine) is linked at Asn610. Catalysis depends on charge relay system residues Asp646 and His678.

The protein belongs to the peptidase S9C family.

Its subcellular location is the secreted. Functionally, extracellular dipeptidyl-peptidase which removes N-terminal dipeptides sequentially from polypeptides having unsubstituted N-termini. This chain is Probable dipeptidyl-peptidase 5 (dpp5), found in Aspergillus clavatus (strain ATCC 1007 / CBS 513.65 / DSM 816 / NCTC 3887 / NRRL 1 / QM 1276 / 107).